We begin with the raw amino-acid sequence, 114 residues long: Cytochrome c oxidase subunit 7A2-like, mitochondrial (114 aa).

The N-terminal 55 residues, 1-55, are a transit peptide targeting the mitochondrion; that stretch reads MYYKFSGFTQKLAGAWASEAYSPQGLKPVVSTEAPPIIFATPTKLTSDSTVYDYA. Residue lysine 69 is modified to N6-acetyllysine. The chain crosses the membrane as a helical span at residues 82-107; it reads PDQMLYRTTMALTVGGTIYCLIALYM.

This sequence belongs to the cytochrome c oxidase VIIa family. In terms of assembly, interacts with the mitochondrial respiratory complexes III (CIII) and IV (CIV), promoting their association.

Its subcellular location is the mitochondrion inner membrane. In terms of biological role, assembly factor that mediates the formation of some mitochondrial respiratory supercomplexes (respirasomes), thereby promoting oxidative phosphorylation and energy metabolism. Acts as a molecular adapter that associates with both mitochondrial respiratory complexes III (CIII) and IV (CIV), promoting their association. Mediates the formation of various mitochondrial respiratory supercomplexes, such as MCIII(2)IV(2), composed of two CIII and two CIV, and the CS-respirasome (MCI(1)III(2)IV(2)), composed of one CI, two CIII and two CIV. Not involved in the formation of the canonical respirasome (MCI(1)III(2)IV(1)), composed of one CI, two CIII and one CIV. The formation of different respirasomes is important for cell adaptation to oxygen conditions and prevent metabolic exhaustion: supercomplexes mediated by COX7A2L/SCAF1 are required to maintain oxidative phosphorylation upon low oxygen conditions and promote metabolic rewiring toward glycolysis. This chain is Cytochrome c oxidase subunit 7A2-like, mitochondrial, found in Homo sapiens (Human).